A 338-amino-acid polypeptide reads, in one-letter code: Lipoate-protein ligase A (338 aa).

One can recognise a BPL/LPL catalytic domain in the interval 29–216 (PATQRVLFLW…AFFAHYGERV (188 aa)). ATP contacts are provided by residues R71, 76–79 (GAVF), and K134. K134 contacts (R)-lipoate.

It belongs to the LplA family. Monomer.

It is found in the cytoplasm. It carries out the reaction L-lysyl-[lipoyl-carrier protein] + (R)-lipoate + ATP = N(6)-[(R)-lipoyl]-L-lysyl-[lipoyl-carrier protein] + AMP + diphosphate + H(+). Its pathway is protein modification; protein lipoylation via exogenous pathway; protein N(6)-(lipoyl)lysine from lipoate: step 1/2. It participates in protein modification; protein lipoylation via exogenous pathway; protein N(6)-(lipoyl)lysine from lipoate: step 2/2. In terms of biological role, catalyzes both the ATP-dependent activation of exogenously supplied lipoate to lipoyl-AMP and the transfer of the activated lipoyl onto the lipoyl domains of lipoate-dependent enzymes. The sequence is that of Lipoate-protein ligase A from Escherichia coli O157:H7.